The primary structure comprises 109 residues: MANHNSSRHTIILLQNSPSRATRTFMDYDSIGQAMDGICGLYERKLKEINPSLRNISYDIADLYNFIDGLADLSALVYDHSISAYLPYDRQWIKQKAFHHLKRIANGGR.

Belongs to the E(R) family. As to quaternary structure, homodimer.

In terms of biological role, may have a role in the cell cycle. The protein is Enhancer of rudimentary homolog of Arabidopsis thaliana (Mouse-ear cress).